Here is a 267-residue protein sequence, read N- to C-terminus: Undecaprenyl-diphosphatase (267 aa).

The next 8 helical transmembrane spans lie at 1–21 (MTYFEAFFLALLQGFTEFLPI), 39–59 (QGLAFDVAVHVGTLAAVVIYF), 83–103 (SNLAWLIVLATIPAALFGLLF), 111–131 (LRSAWVIAATTIVFGLLLWWV), 149–169 (ALFLGIAQAMAMIPGTSRSGI), 189–209 (FLMSIPIITLAGSYLGLKLAM), 218–238 (LLSTGVIVSFISAYICIHFFL), and 246–266 (MMPFVIYRILLGSSLLVWLAL).

The protein belongs to the UppP family.

The protein localises to the cell inner membrane. It carries out the reaction di-trans,octa-cis-undecaprenyl diphosphate + H2O = di-trans,octa-cis-undecaprenyl phosphate + phosphate + H(+). Catalyzes the dephosphorylation of undecaprenyl diphosphate (UPP). Confers resistance to bacitracin. The chain is Undecaprenyl-diphosphatase from Aliivibrio fischeri (strain ATCC 700601 / ES114) (Vibrio fischeri).